A 521-amino-acid polypeptide reads, in one-letter code: Protein nucleotidyltransferase YdiU (521 aa).

Positions 109, 111, 112, 131, 143, 144, 194, and 201 each coordinate ATP. Residue aspartate 270 is the Proton acceptor of the active site. Positions 271 and 280 each coordinate Mg(2+). Aspartate 280 is an ATP binding site.

Belongs to the SELO family. It depends on Mg(2+) as a cofactor. The cofactor is Mn(2+).

The catalysed reaction is L-seryl-[protein] + ATP = 3-O-(5'-adenylyl)-L-seryl-[protein] + diphosphate. It carries out the reaction L-threonyl-[protein] + ATP = 3-O-(5'-adenylyl)-L-threonyl-[protein] + diphosphate. It catalyses the reaction L-tyrosyl-[protein] + ATP = O-(5'-adenylyl)-L-tyrosyl-[protein] + diphosphate. The enzyme catalyses L-histidyl-[protein] + UTP = N(tele)-(5'-uridylyl)-L-histidyl-[protein] + diphosphate. The catalysed reaction is L-seryl-[protein] + UTP = O-(5'-uridylyl)-L-seryl-[protein] + diphosphate. It carries out the reaction L-tyrosyl-[protein] + UTP = O-(5'-uridylyl)-L-tyrosyl-[protein] + diphosphate. In terms of biological role, nucleotidyltransferase involved in the post-translational modification of proteins. It can catalyze the addition of adenosine monophosphate (AMP) or uridine monophosphate (UMP) to a protein, resulting in modifications known as AMPylation and UMPylation. This Burkholderia mallei (strain ATCC 23344) protein is Protein nucleotidyltransferase YdiU.